The following is a 289-amino-acid chain: MRIRLDLAYDGTDFHGWAKQGTSDLRTVQKVLEDNLSMVLRETVELTVAGRTDAGVHAAGQVAHFDIPAHALEQRSIDGDPSKLVRRLGRLLPDDIRVHGVRFAEPGFDARFSAMRRHYVYRITTHPAGALPTRRHDTAQWPKPVELERMQLAADALLGLHDFVAFCKAKPHATTVRELQKFAWKDVSTDIEPQVYEAHVVADAFCWSMVRSLVGSCMAVGEGRRGSGFTAELLDASERSPMVPVAPAKGLSLVGVDYPSADKLQERALETRAVREFPDASASLKLDDE.

The active-site Nucleophile is the Asp-53. Position 119 (Tyr-119) interacts with substrate.

This sequence belongs to the tRNA pseudouridine synthase TruA family. Homodimer.

The catalysed reaction is uridine(38/39/40) in tRNA = pseudouridine(38/39/40) in tRNA. In terms of biological role, formation of pseudouridine at positions 38, 39 and 40 in the anticodon stem and loop of transfer RNAs. This Corynebacterium glutamicum (strain ATCC 13032 / DSM 20300 / JCM 1318 / BCRC 11384 / CCUG 27702 / LMG 3730 / NBRC 12168 / NCIMB 10025 / NRRL B-2784 / 534) protein is tRNA pseudouridine synthase A.